The following is a 210-amino-acid chain: Phosphate propanoyltransferase (210 aa).

26–28 is a binding site for CoA; that stretch reads VSN. His30 and His32 together coordinate Zn(2+). Positions 71 and 78 each coordinate CoA. Residue Arg84 participates in phosphate binding. 4 residues coordinate Zn(2+): Glu90, His138, His140, and His186. Asn193 serves as a coordination point for CoA.

This sequence belongs to the PduL family. In terms of assembly, monomer, when purified in the absence of the encapsulation peptide (EP, residues 1-27). The EP may influence oligomerization. Zn(2+) is required as a cofactor.

It is found in the bacterial microcompartment. The enzyme catalyses propanoyl-CoA + phosphate = propanoyl phosphate + CoA. The protein operates within polyol metabolism; 1,2-propanediol degradation. In terms of biological role, involved in 1,2-propanediol (1,2-PD) utilization in the bacterial microcompartment (BMC) dedicated to 1,2-PD degradation by catalyzing the conversion of propanoyl-CoA to propanoyl-phosphate. Also able to catalyze the reverse reaction. Also has phosphate acetyltransferase activity to a lesser extent. Required for optimal growth on 1,2-PD when the BMC is intact. CoA is regenerated within the BMC (for use by PduP) via this enzyme, although there must also be cofactor transport across the BMC. Directly targeted to the BMC. Functionally, the 1,2-PD-specific bacterial microcompartment (BMC) concentrates low levels of 1,2-PD catabolic enzymes, concentrates volatile reaction intermediates thus enhancing pathway flux and keeps the level of toxic, mutagenic propionaldehyde low. In Salmonella typhimurium (strain LT2 / SGSC1412 / ATCC 700720), this protein is Phosphate propanoyltransferase.